A 598-amino-acid polypeptide reads, in one-letter code: UvrABC system protein C (598 aa).

A GIY-YIG domain is found at 14–91 (DSPGCYLHKD…IQKNMPKYNI (78 aa)). In terms of domain architecture, UVR spans 196–231 (DKIIEDLRSKMLAASEEMAFERAAEYRDLISGIATM).

The protein belongs to the UvrC family. As to quaternary structure, interacts with UvrB in an incision complex.

The protein localises to the cytoplasm. The UvrABC repair system catalyzes the recognition and processing of DNA lesions. UvrC both incises the 5' and 3' sides of the lesion. The N-terminal half is responsible for the 3' incision and the C-terminal half is responsible for the 5' incision. This Streptococcus pyogenes serotype M28 (strain MGAS6180) protein is UvrABC system protein C.